We begin with the raw amino-acid sequence, 244 residues long: Uridylate kinase (244 aa).

19-22 contacts ATP; that stretch reads KVSG. Residues 27–32 form an involved in allosteric activation by GTP region; the sequence is GERGFG. UMP is bound at residue Gly-61. Residues Gly-62 and Arg-66 each contribute to the ATP site. UMP is bound by residues Asp-80 and 141-148; that span reads IGSPFFTT. ATP contacts are provided by Thr-168, Gln-169, Tyr-174, and Asp-177.

The protein belongs to the UMP kinase family. In terms of assembly, homohexamer.

It localises to the cytoplasm. It carries out the reaction UMP + ATP = UDP + ADP. The protein operates within pyrimidine metabolism; CTP biosynthesis via de novo pathway; UDP from UMP (UMPK route): step 1/1. Allosterically activated by GTP. Inhibited by UTP. Its function is as follows. Catalyzes the reversible phosphorylation of UMP to UDP. The sequence is that of Uridylate kinase from Anaplasma phagocytophilum (strain HZ).